The following is a 319-amino-acid chain: tRNA uridine(34) hydroxylase (319 aa).

The Rhodanese domain maps to 127–221 (KQEDTVIIDA…YGKDPEVQGE (95 aa)). Cys-181 acts as the Cysteine persulfide intermediate in catalysis.

The protein belongs to the TrhO family.

The catalysed reaction is uridine(34) in tRNA + AH2 + O2 = 5-hydroxyuridine(34) in tRNA + A + H2O. Catalyzes oxygen-dependent 5-hydroxyuridine (ho5U) modification at position 34 in tRNAs. The protein is tRNA uridine(34) hydroxylase of Bacillus anthracis (strain A0248).